Consider the following 58-residue polypeptide: uncharacterized protein (58 aa).

2 helical membrane-spanning segments follow: residues 7-27 (IFDI…VAKT) and 29-49 (YGTG…AYKI).

The protein localises to the cell membrane. This is an uncharacterized protein from Bacillus subtilis (strain 168).